The sequence spans 344 residues: Nicotinate-nucleotide--dimethylbenzimidazole phosphoribosyltransferase (344 aa).

The Proton acceptor role is filled by Glu-311.

It belongs to the CobT family.

It catalyses the reaction 5,6-dimethylbenzimidazole + nicotinate beta-D-ribonucleotide = alpha-ribazole 5'-phosphate + nicotinate + H(+). It functions in the pathway nucleoside biosynthesis; alpha-ribazole biosynthesis; alpha-ribazole from 5,6-dimethylbenzimidazole: step 1/2. Catalyzes the synthesis of alpha-ribazole-5'-phosphate from nicotinate mononucleotide (NAMN) and 5,6-dimethylbenzimidazole (DMB). The polypeptide is Nicotinate-nucleotide--dimethylbenzimidazole phosphoribosyltransferase (Aromatoleum aromaticum (strain DSM 19018 / LMG 30748 / EbN1) (Azoarcus sp. (strain EbN1))).